A 667-amino-acid chain; its full sequence is Interleukin-17 receptor E (667 aa).

An N-terminal signal peptide occupies residues 1-23 (MGSSRLAALLLPLLLIVIDLSDS). Topologically, residues 24–454 (AGIGFRHLPH…LLCPDVSYRH (431 aa)) are extracellular. The tract at residues 126-174 (LPRRHLSEKSHHISIPSPDISHKGLRSKRTQPSDPETWESLPRLDSQRH) is disordered. N-linked (GlcNAc...) asparagine glycans are attached at residues Asn318, Asn347, and Asn364. Residues 455–475 (LGLLILALLALLTLLGVVLAL) form a helical membrane-spanning segment. Over 476–667 (TCRRPQSGPG…REAARLADLG (192 aa)) the chain is Cytoplasmic. In terms of domain architecture, SEFIR spans 487–624 (ARPVLLLHAA…LLRDLPRLLR (138 aa)).

Forms heterodimers with IL17RA; the heterodimer binds IL17C. As to expression, predominantly expressed in mucosal tissues with high levels in keratinocytes and colon epithelial cells. Very low expression in dermal fibroblasts. Expressed in various tumor cell lines.

The protein resides in the cell membrane. It localises to the cytoplasm. It is found in the secreted. Specific functional receptor for IL17C. May be signaling through the NF-kappa-B and MAPK pathways. May require TRAF3IP2 /ACT1 for signaling. May be a crucial regulator in innate immunity to bacterial pathogens. Isoform 2 and isoform 4 may be either cytoplasmic inactive or dominant active forms. Isoform 3 and isoform 5 may act as soluble decoy receptors. This chain is Interleukin-17 receptor E (IL17RE), found in Homo sapiens (Human).